Reading from the N-terminus, the 381-residue chain is Nitric oxide reductase FlRd-NAD(+) reductase (381 aa).

It belongs to the FAD-dependent oxidoreductase family. FAD is required as a cofactor.

It is found in the cytoplasm. It carries out the reaction 2 reduced [nitric oxide reductase rubredoxin domain] + NAD(+) + H(+) = 2 oxidized [nitric oxide reductase rubredoxin domain] + NADH. It functions in the pathway nitrogen metabolism; nitric oxide reduction. Its function is as follows. One of at least two accessory proteins for anaerobic nitric oxide (NO) reductase. Reduces the rubredoxin moiety of NO reductase. This is Nitric oxide reductase FlRd-NAD(+) reductase from Aliivibrio fischeri (strain ATCC 700601 / ES114) (Vibrio fischeri).